A 120-amino-acid chain; its full sequence is Ribosome-binding factor A (120 aa).

This sequence belongs to the RbfA family. Monomer. Binds 30S ribosomal subunits, but not 50S ribosomal subunits or 70S ribosomes.

It is found in the cytoplasm. Functionally, one of several proteins that assist in the late maturation steps of the functional core of the 30S ribosomal subunit. Associates with free 30S ribosomal subunits (but not with 30S subunits that are part of 70S ribosomes or polysomes). Required for efficient processing of 16S rRNA. May interact with the 5'-terminal helix region of 16S rRNA. This Chlorobaculum parvum (strain DSM 263 / NCIMB 8327) (Chlorobium vibrioforme subsp. thiosulfatophilum) protein is Ribosome-binding factor A.